A 199-amino-acid chain; its full sequence is Ras-related protein Rab-7b (199 aa).

GTP contacts are provided by residues 15–22 (GAIGVGKT), 34–40 (YEEYQTT), 63–67 (DTGGQ), 124–127 (NKID), and 154–155 (AK). Short sequence motifs (switch) lie at residues 28–41 (YVHKTFYEEYQTTL) and 67–82 (QERFRSMVSTFYKGSD). Ser186 is subject to Phosphoserine. S-geranylgeranyl cysteine attachment occurs at residues Cys198 and Cys199.

Belongs to the small GTPase superfamily. Rab family. In terms of tissue distribution, expressed in heart, placenta, lung, skeletal muscle and peripheral blood leukocyte.

It is found in the late endosome. Its subcellular location is the lysosome. It localises to the golgi apparatus. The protein localises to the trans-Golgi network. The protein resides in the cytoplasmic vesicle. It is found in the phagosome. Its subcellular location is the phagosome membrane. Controls vesicular trafficking from endosomes to the trans-Golgi network (TGN). Acts as a negative regulator of TLR9 signaling and can suppress TLR9-triggered TNFA, IL6, and IFNB production in macrophages by promoting TLR9 lysosomal degradation. Also negatively regulates TLR4 signaling in macrophages by promoting lysosomal degradation of TLR4. Promotes megakaryocytic differentiation by increasing NF-kappa-B-dependent IL6 production and subsequently enhancing the association of STAT3 with GATA1. Not involved in the regulation of the EGF- and EGFR degradation pathway. This Homo sapiens (Human) protein is Ras-related protein Rab-7b (RAB7B).